A 1324-amino-acid polypeptide reads, in one-letter code: Ubiquitin carboxyl-terminal hydrolase 42 (1324 aa).

2 disordered regions span residues 1 to 38 and 63 to 87; these read MTIVDKASESSDPSAYQNQPGSSEAVSPGDMDAGSASW and YSSSSVPDKSKPSPQKDQALGDGIA. The span at 10-25 shows a compositional bias: polar residues; the sequence is SSDPSAYQNQPGSSEA. Residues 63–80 are compositionally biased toward low complexity; the sequence is YSSSSVPDKSKPSPQKDQ. Position 75 is a phosphoserine (Ser75). Residues 111-412 enclose the USP domain; the sequence is AGLQNLGNTC…QAYVLFYIRS (302 aa). Catalysis depends on Cys120, which acts as the Nucleophile. Catalysis depends on His371, which acts as the Proton acceptor. Disordered stretches follow at residues 452–494, 536–707, 722–1026, 1085–1131, 1149–1254, and 1275–1294; these read IGPQ…NRAS, QSQP…MPAP, LSNK…RHRS, RAGL…HPDR, DRFH…VKDS, and GGFPLSGGPPLEGVGPFREK. Residues 477–489 are compositionally biased toward low complexity; that stretch reads PSSSMSSPNGNSS. At Ser483 the chain carries Phosphoserine. Positions 536-564 are enriched in polar residues; sequence QSQPNLHSNSLENPTKPVPSSTITNSAVQ. Residues 565-576 show a composition bias toward low complexity; sequence STSNASTMSVSS. Over residues 586-603 the composition is skewed to polar residues; the sequence is ESCSQPVMNGKSKLNSSV. A phosphoserine mark is found at Ser754 and Ser856. Basic and acidic residues-rich tracts occupy residues 938-974, 984-1013, 1101-1113, 1149-1158, and 1165-1191; these read AKEKIGSLRKVDRGHYRSRRERSSSGEPARESRSKTE, CPRERDRQDRHAPEHHPGHGDRLSPGERRS, RGCEPARERERHR, DRFHEHENGK, and DSVENSDSHVEKKARRSEQKDPLEEPK. Ser1181 bears the Phosphoserine mark. Positions 1192–1206 are enriched in basic residues; that stretch reads AKKHKKSKKKKKSKD. Residues 1207–1218 are compositionally biased toward basic and acidic residues; that stretch reads KHRDRDSRHQQD. Residues Ser1219, Ser1222, and Ser1226 each carry the phosphoserine modification. A compositionally biased stretch (basic residues) spans 1231–1245; that stretch reads HRHKKKKKKKKRHSR. Ser1247 carries the post-translational modification Phosphoserine.

Belongs to the peptidase C19 family. As to expression, broadly expressed.

The catalysed reaction is Thiol-dependent hydrolysis of ester, thioester, amide, peptide and isopeptide bonds formed by the C-terminal Gly of ubiquitin (a 76-residue protein attached to proteins as an intracellular targeting signal).. Functionally, deubiquitinating enzyme which may play an important role during spermatogenesis. The chain is Ubiquitin carboxyl-terminal hydrolase 42 (USP42) from Homo sapiens (Human).